A 322-amino-acid polypeptide reads, in one-letter code: Heat-inducible transcription repressor HrcA (322 aa).

This sequence belongs to the HrcA family.

Negative regulator of class I heat shock genes (grpE-dnaK-dnaJ and groELS operons). Prevents heat-shock induction of these operons. In Staphylococcus carnosus (strain TM300), this protein is Heat-inducible transcription repressor HrcA.